The following is a 510-amino-acid chain: Protein PLASTID TRANSCRIPTIONALLY ACTIVE 16, chloroplastic (510 aa).

Positions 1-14 (MASSSTSFPLTTAP) are enriched in polar residues. The N-terminal 19 residues, 1 to 19 (MASSSTSFPLTTAPPQGVR), are a transit peptide targeting the chloroplast. Disordered regions lie at residues 1–24 (MASS…NRRK) and 38–58 (LGKT…NPFQ). Positions 41-51 (TKGDDDSEGKQ) are enriched in basic and acidic residues. 94–123 (IFVAGATGQAGIRIAQTLLQRGFSVRAGVP) provides a ligand contact to NADP(+). A coiled-coil region spans residues 354–403 (ARERAEEEAKVAADKAREAAEAAKEFEKQMQKLSEKEAEAASLAEDAQQK). Serine 395 is modified (phosphoserine). Threonine 451 bears the Phosphothreonine; by STN7 mark. The tract at residues 453–493 (RGQAKARNLPPKKAVVKQRPSSPFASKPKEERPKKPEKEVR) is disordered. Residues 479–493 (KPKEERPKKPEKEVR) show a composition bias toward basic and acidic residues.

Belongs to the NAD(P)-dependent epimerase/dehydratase family. As to quaternary structure, component of the plastid transcriptionally active chromosome required for plastid gene expression. Interacts with DEGP1 under high light conditions and maybe its degradation target. In terms of processing, excluded from chloroplast nucleoid when phosphorylated on Thr-451 by STN7 that may regulate membrane-anchoring functions of the nucleoid.

The protein resides in the plastid. It is found in the chloroplast stroma. The protein localises to the chloroplast nucleoid. Its subcellular location is the chloroplast thylakoid membrane. Functionally, probably involved in the regulation of plastid gene expression. In Arabidopsis thaliana (Mouse-ear cress), this protein is Protein PLASTID TRANSCRIPTIONALLY ACTIVE 16, chloroplastic.